Here is a 186-residue protein sequence, read N- to C-terminus: Transcription factor FapR (186 aa).

A MaoC-like domain is found at 98–168; that stretch reads FTKTQIARGH…YVIEVNSYVR (71 aa).

It belongs to the FapR family.

Its function is as follows. Transcriptional factor involved in regulation of membrane lipid biosynthesis by repressing genes involved in fatty acid and phospholipid metabolism. The protein is Transcription factor FapR of Staphylococcus haemolyticus (strain JCSC1435).